Reading from the N-terminus, the 406-residue chain is uncharacterized protein (406 aa).

The segment at 1 to 36 (MDRVRSLIGNRRGRRHNRQHPPYPHSGSPSTVNLLG) is disordered.

This sequence to yeast YMR316w.

This is an uncharacterized protein from Saccharomyces cerevisiae (strain ATCC 204508 / S288c) (Baker's yeast).